Reading from the N-terminus, the 381-residue chain is Mannitol-1-phosphate 5-dehydrogenase (381 aa).

NAD(+) is bound at residue A3 to G14.

Belongs to the mannitol dehydrogenase family.

It catalyses the reaction D-mannitol 1-phosphate + NAD(+) = beta-D-fructose 6-phosphate + NADH + H(+). The polypeptide is Mannitol-1-phosphate 5-dehydrogenase (Photobacterium profundum (strain SS9)).